Consider the following 346-residue polypeptide: N-acetyl-gamma-glutamyl-phosphate reductase (346 aa).

Residue Cys150 is part of the active site.

It belongs to the NAGSA dehydrogenase family. Type 1 subfamily.

The protein localises to the cytoplasm. The catalysed reaction is N-acetyl-L-glutamate 5-semialdehyde + phosphate + NADP(+) = N-acetyl-L-glutamyl 5-phosphate + NADPH + H(+). The protein operates within amino-acid biosynthesis; L-arginine biosynthesis; N(2)-acetyl-L-ornithine from L-glutamate: step 3/4. In terms of biological role, catalyzes the NADPH-dependent reduction of N-acetyl-5-glutamyl phosphate to yield N-acetyl-L-glutamate 5-semialdehyde. This Acetivibrio thermocellus (strain ATCC 27405 / DSM 1237 / JCM 9322 / NBRC 103400 / NCIMB 10682 / NRRL B-4536 / VPI 7372) (Clostridium thermocellum) protein is N-acetyl-gamma-glutamyl-phosphate reductase.